We begin with the raw amino-acid sequence, 554 residues long: MKLLKGSGAALLALFFALVYLLPINSRLLWQPDETRYAEISREMLQRGDWVVPHLLGIRYFEKPIAGYWFNNISQWIFGDTNFAVRFGSIFSTALSAVFVYWLATLLWRNRSTSFLAALIYLSMLLVFSIGSYAVLDPMISLWLTASMVCFYLTLRAETAKQKIGAYLLLGLACGMGFMTKGFLALAVPVISVLPIVIQQKRVKELIIFGPIAIVGAVILSLPWALAIAQREPDFWHYFFWVEHIQRFAEKDAQHKAPIWYYLPILCLGVLPWLGLLPAALLKGWRERVARPELFFLLSWVLMPLIFFSVAKGKLPTYILPCMAPLSLLMAAYATDCANKMHMRALKVNGAINLIFGFICALAILVIGMGWVGHLVAYGPQEHQKVILATIAFAGWGIVGFATMRNNARHWHWAAACPLLFILLVGYLIPQQVIDSKQPQNFIQNNFNELSSSRYVATDSVGVAAGLAWELKRSDILMFSEKGELSYGLNYADSGDHYISAQDFSDWLVHARQKGDVSLVIQLSRNEKIPDSLPAADKVSLMNRLALLWYKKTP.

A run of 11 helical transmembrane segments spans residues 4-24 (LKGS…LLPI), 87-107 (FGSI…ATLL), 115-135 (FLAA…SYAV), 178-198 (FMTK…PIVI), 206-226 (LIIF…PWAL), 262-282 (YLPI…AALL), 293-313 (ELFF…VAKG), 315-335 (LPTY…AYAT), 352-372 (INLI…MGWV), 384-404 (QKVI…FATM), and 410-430 (HWHW…YLIP).

It belongs to the glycosyltransferase 83 family.

It localises to the cell inner membrane. It carries out the reaction 4-amino-4-deoxy-alpha-L-arabinopyranosyl di-trans,octa-cis-undecaprenyl phosphate + lipid IVA = lipid IIA + di-trans,octa-cis-undecaprenyl phosphate.. The protein operates within lipopolysaccharide metabolism; 4-amino-4-deoxy-beta-L-arabinose-lipid A biosynthesis. In terms of biological role, catalyzes the transfer of the L-Ara4N moiety of the glycolipid undecaprenyl phosphate-alpha-L-Ara4N to lipid A. The modified arabinose is attached to lipid A and is required for resistance to polymyxin and cationic antimicrobial peptides. This Yersinia enterocolitica serotype O:8 / biotype 1B (strain NCTC 13174 / 8081) protein is Undecaprenyl phosphate-alpha-4-amino-4-deoxy-L-arabinose arabinosyl transferase.